Consider the following 217-residue polypeptide: 25 kDa ookinete surface antigen (217 aa).

An N-terminal signal peptide occupies residues 1–16; it reads MNKLYSLFLFLFIQLS. In terms of domain architecture, EGF-like 1; truncated spans 30 to 59; that stretch reads CKKGFLIQMSGHLECKCENDLVLVNEETCE. EGF-like domains lie at 61–106, 106–150, and 153–193; these read KVLK…NVCI, ILNE…NKCS, and GETK…STCT. 9 disulfide bridges follow: C65/C80, C74/C92, C94/C105, C110/C120, C115/C133, C135/C149, C157/C168, C161/C177, and C179/C192. N112 is a glycosylation site (N-linked (GlcNAc...) asparagine). Residues N165 and N187 are each glycosylated (N-linked (GlcNAc...) asparagine). S196 carries GPI-anchor amidated serine lipidation. Positions 197 to 217 are cleaved as a propeptide — removed in mature form; the sequence is VYNILNLSLIFVLFSVCFFIM. N202 is a glycosylation site (N-linked (GlcNAc...) asparagine).

The protein localises to the cell membrane. The sequence is that of 25 kDa ookinete surface antigen from Plasmodium reichenowi.